Consider the following 179-residue polypeptide: UPF0302 protein YpiB (179 aa).

Belongs to the UPF0302 family.

This is UPF0302 protein YpiB (ypiB) from Bacillus subtilis (strain 168).